A 385-amino-acid chain; its full sequence is tRNA N6-adenosine threonylcarbamoyltransferase (385 aa).

The a divalent metal cation site is built by His-140, His-144, and Tyr-161. Residues 161-165 (YVSGG), Asp-193, Gly-208, Glu-212, and Asn-314 contribute to the substrate site. A divalent metal cation is bound at residue Asp-343.

The protein belongs to the KAE1 / TsaD family. As to quaternary structure, component of the EKC/KEOPS complex composed of at least BUD32, CGI121, GON7, KAE1 and PCC1; the whole complex dimerizes. A divalent metal cation serves as cofactor.

The protein resides in the cytoplasm. It is found in the nucleus. It carries out the reaction L-threonylcarbamoyladenylate + adenosine(37) in tRNA = N(6)-L-threonylcarbamoyladenosine(37) in tRNA + AMP + H(+). Component of the EKC/KEOPS complex that is required for the formation of a threonylcarbamoyl group on adenosine at position 37 (t(6)A37) in tRNAs that read codons beginning with adenine. The complex is probably involved in the transfer of the threonylcarbamoyl moiety of threonylcarbamoyl-AMP (TC-AMP) to the N6 group of A37. KAE1 likely plays a direct catalytic role in this reaction, but requires other protein(s) of the complex to fulfill this activity. The EKC/KEOPS complex also promotes both telomere uncapping and telomere elongation. The complex is required for efficient recruitment of transcriptional coactivators. This chain is tRNA N6-adenosine threonylcarbamoyltransferase, found in Eremothecium gossypii (strain ATCC 10895 / CBS 109.51 / FGSC 9923 / NRRL Y-1056) (Yeast).